Reading from the N-terminus, the 333-residue chain is G-protein coupled receptor 146 (333 aa).

Over 1–21 (MWSCEDLNYTNSGEEQYLCNE) the chain is Extracellular. Asn-8 carries an N-linked (GlcNAc...) asparagine glycan. The chain crosses the membrane as a helical span at residues 22–42 (FHLFLFIFSVLYLIICFPVGL). Residues 43–65 (CYNVQLVLVNLYNKATMTMPDVY) lie on the Cytoplasmic side of the membrane. Residues 66–86 (FVNMAIAGLIINAVAPVYLFG) traverse the membrane as a helical segment. Over 87–102 (PAYTKWSLWSFGNEVY) the chain is Extracellular. The helical transmembrane segment at 103–123 (ITLLILFNVSSLVIMYSTTLL) threads the bilayer. Residues 124–146 (SLDYYIECALPRTYMSSVYNTKH) lie on the Cytoplasmic side of the membrane. Residues 147–167 (VCGFIWGGAVLTSFSSLLFYI) form a helical membrane-spanning segment. At 168–189 (CNHVSTKIIECSKMQNREAADA) the chain is on the extracellular side. The helical transmembrane segment at 190-210 (IMVLIGYVVPIIAVIYALVLI) threads the bilayer. At 211–234 (LQIRKEATPLDQESGRLDPSVHRL) the chain is on the cytoplasmic side. The helical transmembrane segment at 235 to 255 (LIATVCTQFILWTPYYVTLLV) threads the bilayer. Over 256–275 (NTFMDARVKSSNTFYIRIFQ) the chain is Extracellular. A helical transmembrane segment spans residues 276 to 296 (FTEGLSNFLAFSSSFVLPLIH). The Cytoplasmic segment spans residues 297 to 333 (RHINKNFSGKLQRLLKRLHCGSQGCTHEHTVVQQVMT).

The protein belongs to the G-protein coupled receptor 1 family.

It is found in the cell membrane. In terms of biological role, G-protein coupled receptor required for the regulation of plasma cholesterol levels. This chain is G-protein coupled receptor 146 (gpr146), found in Xenopus laevis (African clawed frog).